The primary structure comprises 162 residues: MEDETLGFFKKTSSSHARLNVPALVQVAALAIIMIRGLDVLMIFNTLGVRGIGEFIHRSVQTWSLTLVFLSSLVLVFIEIWCAFSLVKGRRWARWLYLLTQITAASYLWAASLGYGYPELFSIPGESKREIFHSLMLQKLPDMLILMLLFVPSTSRRFFQLQ.

The Periplasmic portion of the chain corresponds to methionine 1–alanine 23. Residues leucine 24 to phenylalanine 44 traverse the membrane as a helical segment. The Cytoplasmic segment spans residues asparagine 45–threonine 66. Residues leucine 67–valine 87 form a helical membrane-spanning segment. At lysine 88–arginine 94 the chain is on the periplasmic side. A helical transmembrane segment spans residues tryptophan 95–tyrosine 115. Residues glycine 116 to glutamine 162 lie on the Cytoplasmic side of the membrane.

It is found in the cell inner membrane. The sequence is that of Inner membrane protein YbjO (ybjO) from Escherichia coli O157:H7.